A 200-amino-acid polypeptide reads, in one-letter code: Casparian strip membrane protein 2 (200 aa).

The Cytoplasmic portion of the chain corresponds to methionine 1–lysine 37. The chain crosses the membrane as a helical span at residues glycine 38–alanine 58. Over serine 59–glutamine 88 the chain is Extracellular. Residues phenylalanine 89–isoleucine 109 form a helical membrane-spanning segment. At valine 110–arginine 121 the chain is on the cytoplasmic side. Residues isoleucine 122–alanine 142 form a helical membrane-spanning segment. Over alanine 143–serine 175 the chain is Extracellular. The N-linked (GlcNAc...) asparagine glycan is linked to asparagine 153. A helical transmembrane segment spans residues valine 176–alanine 196. At leucine 197–tyrosine 200 the chain is on the cytoplasmic side.

Belongs to the Casparian strip membrane proteins (CASP) family. In terms of assembly, homodimer and heterodimers.

The protein localises to the cell membrane. Its function is as follows. Regulates membrane-cell wall junctions and localized cell wall deposition. Required for establishment of the Casparian strip membrane domain (CSD) and the subsequent formation of Casparian strips, a cell wall modification of the root endodermis that determines an apoplastic barrier between the intraorganismal apoplasm and the extraorganismal apoplasm and prevents lateral diffusion. This is Casparian strip membrane protein 2 from Ricinus communis (Castor bean).